A 1131-amino-acid polypeptide reads, in one-letter code: Protein DWARF 53 (1131 aa).

Residues 8-181 (ARQCLSPAAV…KLAILRPAPP (174 aa)) enclose the Clp R domain. Repeat stretches follow at residues 12 to 85 (LSPA…LDRL) and 103 to 181 (VSNS…PAPP). Residues 511-574 (NRDPYKPFPR…ISSPSVTNKR (64 aa)) are disordered. Positions 558-569 (SSSTARPISSPS) are enriched in low complexity. An EAR 1 motif is present at residues 578–582 (LVLNL). The interval 588–655 (KSDENLQERG…KRVEDSERSV (68 aa)) is disordered. The span at 597 to 609 (GMQSQHGTLSNVD) shows a compositional bias: polar residues. Over residues 646 to 655 (KRVEDSERSV) the composition is skewed to basic and acidic residues. The short motif at 799-803 (LDLNL) is the EAR 2 element. 2 disordered regions span residues 951–970 (ISDDQEKLQESPSSSKRLHR) and 976–1002 (FDLNLPVDEDEPLDADDDSSSHENSYG). The EAR 3 signature appears at 976-981 (FDLNLP). Acidic residues predominate over residues 982–993 (VDEDEPLDADDD).

It belongs to the ClpA/ClpB family. In terms of assembly, interacts with D3. Interacts with D14. The interaction with D14 is enhanced in the presence of strigolactones. The interaction with D14 occurs in the presence of (2'R) stereoisomers of strigolactones, but not (2'S) stereoisomers. Interacts with the TOPLESS-related proteins TPR1, TPR2 and TPR3. Interacts with SPL14/IPA1. Polyubiquitinated. Strigolactone, but not karrikin, triggers rapid SCF(D3)-dependent degradation via the proteasome. Expressed in the shoot bases of seedlings, young leaves, axillary buds and young panicles. Expressed in young roots vasculature, culms, internodes and nodes, preferentially in the parenchyma cells surrounding the xylem.

Its subcellular location is the nucleus. Repressor of strigolactones (SL) signaling. Subjected to a negative feedback control of SL signaling. Suppresses the transcriptional activation activity of SPL14/IPA1 in SL signaling. Acts with SPL14/IPA1 to mediate the SL-regulated tiller development. Subject to a negative feedback regulation by SPL14/IPA1, which binds to D53 promoter to repress D53 gene expression. In Oryza sativa subsp. japonica (Rice), this protein is Protein DWARF 53.